The chain runs to 235 residues: Protein fmp52-1, mitochondrial (235 aa).

Residues M1–R36 constitute a mitochondrion transit peptide.

The protein belongs to the FMP52 family.

It localises to the mitochondrion outer membrane. This is Protein fmp52-1, mitochondrial (fmp521) from Aspergillus oryzae (strain ATCC 42149 / RIB 40) (Yellow koji mold).